The primary structure comprises 37 residues: Large ribosomal subunit protein bL36c (37 aa).

It belongs to the bacterial ribosomal protein bL36 family.

It is found in the plastid. The protein localises to the chloroplast. This Chaetosphaeridium globosum (Charophycean green alga) protein is Large ribosomal subunit protein bL36c.